The sequence spans 214 residues: Avenin (214 aa).

The signal sequence occupies residues 1–28 (MKIFFFLALLALVVSATFAQYAESDGSY). The segment at 180–214 (RGQESGVFTPKFTQTSFQPYPEGEDESSLINKASE) is disordered.

Its function is as follows. Seed storage protein. The chain is Avenin from Avena sativa (Oat).